The primary structure comprises 528 residues: UDP-glucuronosyltransferase 2B30 (528 aa).

A signal peptide spans 1 to 23 (MSMKWTSALLLIQLSCYLSSGNC). N6-succinyllysine is present on Lys135. A glycan (N-linked (GlcNAc...) asparagine) is linked at Asn315. The chain crosses the membrane as a helical span at residues 493 to 513 (VIGFLLACVATVIFIITKCLF).

This sequence belongs to the UDP-glycosyltransferase family. In terms of tissue distribution, expressed in several tissues, including prostate, testis, mammary gland, kidney, adrenals and intestine.

The protein resides in the microsome membrane. Its subcellular location is the endoplasmic reticulum membrane. It carries out the reaction glucuronate acceptor + UDP-alpha-D-glucuronate = acceptor beta-D-glucuronoside + UDP + H(+). In terms of biological role, UDPGTs are of major importance in the conjugation and subsequent elimination of potentially toxic xenobiotics and endogenous compounds. This isozyme has glucuronidating capacity on testosterone, dihydrotestosterone, 5-alpha-androstane-3-alpha,17-beta-diol, androsterone, oestradiol, tetrahydroaldosterone and tetrahydrocortisone. This enzyme is essential to inactivation of several steroids. This is UDP-glucuronosyltransferase 2B30 (UGT2B30) from Macaca fascicularis (Crab-eating macaque).